We begin with the raw amino-acid sequence, 228 residues long: MYGPGTKFEKAMFYTRGPKEKQLLVNLASTTDKAVHARKRRIISHALSEASIRSYEVTILDKIQLFCKQLSDASTFGGPYKNMSRWFSYLTYDIMGQLTFSQSYDMLTKDDHHFIQPLIDSYQHSQLGTEPKLDQWGLAPLLLLRIMAENKKFRRYVDDQVNHRIALEKAGQGPPDIFKLLLEHKDKETGESMGFKELSDEAVVLIIAGRRFFSPCVNGSKRFTLNSQ.

Cysteine 216 provides a ligand contact to heme.

This sequence belongs to the cytochrome P450 family. Heme is required as a cofactor.

Its pathway is mycotoxin biosynthesis. Cytochrome P450 monooxygenase; part of the gene cluster that mediates the biosynthesis of acetylaranotin, a member of the epipolythiodioxopiperazine (ETP) class of toxins characterized by a disulfide-bridged cyclic dipeptide. The first step of acetylaranotin biosynthesis is performed by the NRPS ataP which produces diketopiperazine cyclo-L-Phe-L-Phe via the condensation of 2 phenylalanines (L-Phe). The ataC domain of ataTC then catalyzes the formation of bishydroxylation of cyclo-L-Phe-L-Phe. The glutathione S-transferase domain ataG in ataIMG further catalyzes the conjugation of two glutathiones to the bishydroxylated intermediate. Next, the dipeptidase ataJ removes the Glu residues. The following step is performed by the carbon sulfur lyase domain ataI of ataIMG which may convert the bis-cysteinyl adduct to yield an epidithiol intermediate. The ataT domain from ataTC then catalyzes the oxidation of the free dithiols, followed by a cyclization step catalyzed by the cytochrome P450 ataF. AtaF probably acts as an epoxidase to promote a dual epoxidation formation at C8 and C9 along with C8' and C9', followed by the spontaneous nucleophilic attack of the amide nitrogens N10 and N10' to yield an intermediate with the pyrrolidine partial structure. The final steps of acetylaranotin biosynthesis involve the acetylation and ring rearrangement of an epitetrathiodiketopiperazine intermediate to produce acetylaranotin. AtaH probably catalyzes the acetylation of epitetrathiodiketopiperazine to produce a diacetate and ataY is responsible for the formation of the dihydrooxepin moiety that converts the diacetate intermediate to acetylaranotin via acetylapoaranotin. Both enzymes could function independently in the absence of the other. The acetylaranotin bis-thiomethyltransferase ataS located outside of acetylaranotin gene cluster is the main thiomethyltransferase responsible for converting acetylaranotin and its related intermediates to their methylated forms. The protein is Cytochrome P450 monooxygenase ataY of Aspergillus terreus (strain NIH 2624 / FGSC A1156).